The primary structure comprises 116 residues: Large ribosomal subunit protein bL20 (116 aa).

This sequence belongs to the bacterial ribosomal protein bL20 family.

In terms of biological role, binds directly to 23S ribosomal RNA and is necessary for the in vitro assembly process of the 50S ribosomal subunit. It is not involved in the protein synthesizing functions of that subunit. In Mycoplasmopsis agalactiae (strain NCTC 10123 / CIP 59.7 / PG2) (Mycoplasma agalactiae), this protein is Large ribosomal subunit protein bL20.